Reading from the N-terminus, the 494-residue chain is Cheilanthifoline synthase (494 aa).

A helical transmembrane segment spans residues 4-24; that stretch reads TIWLIISTVIIVLGIAKFLLG. Cys437 serves as a coordination point for heme.

It belongs to the cytochrome P450 family. It depends on heme as a cofactor. As to expression, expressed in roots and at lower levels in stems, leaves and plantlets.

The protein resides in the endoplasmic reticulum membrane. The catalysed reaction is (S)-scoulerine + reduced [NADPH--hemoprotein reductase] + O2 = (S)-cheilanthifoline + oxidized [NADPH--hemoprotein reductase] + 2 H2O + H(+). Its function is as follows. Methylenedioxy bridge-forming cytochrome P450 involved in the biosynthesis of isoquinoline alkaloids. Converts (S)-scoulerine into (S)-cheilanthifoline, a precursor of sanguinarine. Catalyzes an oxidative reaction that does not incorporate oxygen into the product. The chain is Cheilanthifoline synthase from Argemone mexicana (Mexican prickly poppy).